The sequence spans 122 residues: UPF0102 protein CLH_1204 (122 aa).

This sequence belongs to the UPF0102 family.

This Clostridium botulinum (strain Alaska E43 / Type E3) protein is UPF0102 protein CLH_1204.